The sequence spans 521 residues: Glucosidase 2 subunit beta (521 aa).

Residues 1 to 14 (MLLLLLLLLPLCWA) form the signal peptide. Ser-24 carries the post-translational modification Phosphoserine. 2 consecutive LDL-receptor class A domains span residues 37–71 (FTCLDGTATIPFDQVNDDYCDCKDGSDEPGTAACP) and 69–113 (ACPN…TVCE). 2 disulfide bridges follow: Cys-39–Cys-58 and Cys-56–Cys-70. Asp-49 serves as a coordination point for substrate. 6 residues coordinate Ca(2+): Gln-50, Asp-53, Tyr-55, Asp-57, Asp-63, and Glu-64. Residue Asp-53 participates in substrate binding. Asn-72 carries an N-linked (GlcNAc...) asparagine glycan. 3 disulfide bridges follow: Cys-77/Cys-99, Cys-97/Cys-112, and Cys-100/Cys-116. Ser-89 is modified (phosphoserine; by PKC). Ca(2+)-binding residues include Arg-91, Asp-94, Val-96, Asp-98, Asp-104, and Glu-105. N6-succinyllysine is present on Lys-166. Phosphoserine is present on Ser-168. 2 consecutive EF-hand domains span residues 209–244 (REQERAASAFQELDDNMDGMVSLAELQTHPELDTDG) and 245–290 (DGAL…TDIP). Ca(2+)-binding residues include Asp-222, Asn-224, Asp-226, Met-228, and Glu-233. Disordered regions lie at residues 226–267 (DGMV…DTTS) and 280–350 (YRSE…EKMP). Composition is skewed to acidic residues over residues 241–253 (DTDGDGALSEEEA) and 308–331 (TEEEEEEEEEPEEEEEEEEEEEEA). Positions 332–343 (PPPLQPPQPPSP) are enriched in pro residues. Phosphoserine; by PKC occurs at positions 376 and 383. The MRH domain maps to 406 to 507 (SQCYELTTNE…ELMTPAACPE (102 aa)). The cysteines at positions 408 and 421 are disulfide-linked. A Phosphoserine; by PKC modification is found at Ser-427. 2 disulfides stabilise this stretch: Cys-464–Cys-493 and Cys-478–Cys-505. Asn-469 carries N-linked (GlcNAc...) asparagine glycosylation. The short motif at 518 to 521 (HDEL) is the Prevents secretion from ER element.

Heterodimer of a catalytic alpha subunit (GANAB) and a beta subunit (PRKCSH). Binds glycosylated PTPRC. Expressed in kidney (at protein level).

The protein resides in the endoplasmic reticulum. It functions in the pathway glycan metabolism; N-glycan metabolism. Functionally, regulatory subunit of glucosidase II that cleaves sequentially the 2 innermost alpha-1,3-linked glucose residues from the Glc(2)Man(9)GlcNAc(2) oligosaccharide precursor of immature glycoproteins. Required for efficient PKD1/Polycystin-1 biogenesis and trafficking to the plasma membrane of the primary cilia. The polypeptide is Glucosidase 2 subunit beta (Mus musculus (Mouse)).